We begin with the raw amino-acid sequence, 315 residues long: Uracil-DNA glycosylase (315 aa).

Residues 35-80 are compositionally biased toward low complexity; that stretch reads AAAAAPAGAGAGASKPARPPAAARPAKGTPAASAATTATGADASAP. The interval 35–88 is disordered; the sequence is AAAAAPAGAGAGASKPARPPAAARPAKGTPAASAATTATGADASAPAPDPGAPT. Asp-158 acts as the Proton acceptor in catalysis.

The protein belongs to the uracil-DNA glycosylase (UDG) superfamily. UNG family.

The protein localises to the host nucleus. It catalyses the reaction Hydrolyzes single-stranded DNA or mismatched double-stranded DNA and polynucleotides, releasing free uracil.. Functionally, excises uracil residues from the DNA which can arise as a result of misincorporation of dUMP residues by DNA polymerase or deamination of cytosines. Therefore may reduce deleterious uracil incorporation into the viral genome, particularly in terminally differentiated cells which lack DNA repair enzymes. In Suid herpesvirus 1 (strain Indiana-Funkhauser / Becker) (SuHV-1), this protein is Uracil-DNA glycosylase (UL2).